The following is a 437-amino-acid chain: Protein translocase subunit SecY (437 aa).

10 consecutive transmembrane segments (helical) span residues 19 to 39 (LFTL…IPGV), 69 to 89 (LLQI…SIIL), 122 to 142 (VALA…GALF), 157 to 177 (IFTT…VMWL), 189 to 209 (GMSI…LWAI), 219 to 239 (WIEF…VVFV), 275 to 295 (GVIP…IVQF), 318 to 338 (HIIL…AISF), 378 to 398 (GSLY…GFGA), and 400 to 420 (QNFP…LETV).

The protein belongs to the SecY/SEC61-alpha family. As to quaternary structure, component of the Sec protein translocase complex. Heterotrimer consisting of SecY, SecE and SecG subunits. The heterotrimers can form oligomers, although 1 heterotrimer is thought to be able to translocate proteins. Interacts with the ribosome. Interacts with SecDF, and other proteins may be involved. Interacts with SecA.

The protein localises to the cell membrane. The central subunit of the protein translocation channel SecYEG. Consists of two halves formed by TMs 1-5 and 6-10. These two domains form a lateral gate at the front which open onto the bilayer between TMs 2 and 7, and are clamped together by SecE at the back. The channel is closed by both a pore ring composed of hydrophobic SecY resides and a short helix (helix 2A) on the extracellular side of the membrane which forms a plug. The plug probably moves laterally to allow the channel to open. The ring and the pore may move independently. This Streptomyces lividans protein is Protein translocase subunit SecY.